Here is a 698-residue protein sequence, read N- to C-terminus: Polyphosphate kinase (698 aa).

Asn63 contributes to the ATP binding site. Mg(2+) contacts are provided by Arg390 and Arg420. The active-site Phosphohistidine intermediate is His450. The ATP site is built by Tyr483, Arg579, and His607.

Belongs to the polyphosphate kinase 1 (PPK1) family. Mg(2+) serves as cofactor. In terms of processing, an intermediate of this reaction is the autophosphorylated ppk in which a phosphate is covalently linked to a histidine residue through a N-P bond.

It catalyses the reaction [phosphate](n) + ATP = [phosphate](n+1) + ADP. Functionally, catalyzes the reversible transfer of the terminal phosphate of ATP to form a long-chain polyphosphate (polyP). The polypeptide is Polyphosphate kinase (Xylella fastidiosa (strain 9a5c)).